The primary structure comprises 398 residues: 1-deoxy-D-xylulose 5-phosphate reductoisomerase (398 aa).

Threonine 10, glycine 11, serine 12, isoleucine 13, asparagine 38, and asparagine 124 together coordinate NADPH. Lysine 125 serves as a coordination point for 1-deoxy-D-xylulose 5-phosphate. Glutamate 126 provides a ligand contact to NADPH. Aspartate 150 is a Mn(2+) binding site. Residues serine 151, glutamate 152, serine 176, and histidine 199 each coordinate 1-deoxy-D-xylulose 5-phosphate. Residue glutamate 152 participates in Mn(2+) binding. NADPH is bound at residue glycine 205. 1-deoxy-D-xylulose 5-phosphate-binding residues include serine 212, asparagine 217, lysine 218, and glutamate 221. Glutamate 221 lines the Mn(2+) pocket.

The protein belongs to the DXR family. Mg(2+) is required as a cofactor. Mn(2+) serves as cofactor.

The catalysed reaction is 2-C-methyl-D-erythritol 4-phosphate + NADP(+) = 1-deoxy-D-xylulose 5-phosphate + NADPH + H(+). It functions in the pathway isoprenoid biosynthesis; isopentenyl diphosphate biosynthesis via DXP pathway; isopentenyl diphosphate from 1-deoxy-D-xylulose 5-phosphate: step 1/6. In terms of biological role, catalyzes the NADPH-dependent rearrangement and reduction of 1-deoxy-D-xylulose-5-phosphate (DXP) to 2-C-methyl-D-erythritol 4-phosphate (MEP). This chain is 1-deoxy-D-xylulose 5-phosphate reductoisomerase, found in Rippkaea orientalis (strain PCC 8801 / RF-1) (Cyanothece sp. (strain PCC 8801)).